Here is a 523-residue protein sequence, read N- to C-terminus: Cytochrome P450 52-N1 (523 aa).

Residues Ala5–Ile25 traverse the membrane as a helical segment. Heme is bound at residue Cys469.

Belongs to the cytochrome P450 family. It depends on heme as a cofactor.

It localises to the membrane. The catalysed reaction is an omega-methyl-long-chain fatty acid + reduced [NADPH--hemoprotein reductase] + O2 = an omega-hydroxy-long-chain fatty acid + oxidized [NADPH--hemoprotein reductase] + H2O + H(+). It carries out the reaction (9Z,12Z)-octadecadienoate + reduced [NADPH--hemoprotein reductase] + O2 = 18-hydroxy-(9Z,12Z)-octadecadienoate + oxidized [NADPH--hemoprotein reductase] + H2O + H(+). It catalyses the reaction (9Z)-octadecenoate + reduced [NADPH--hemoprotein reductase] + O2 = 18-hydroxy-(9Z)-octadecenoate + oxidized [NADPH--hemoprotein reductase] + H2O + H(+). The enzyme catalyses hexadecanoate + reduced [NADPH--hemoprotein reductase] + O2 = 16-hydroxyhexadecanoate + oxidized [NADPH--hemoprotein reductase] + H2O + H(+). The catalysed reaction is (9Z)-hexadecenoate + reduced [NADPH--hemoprotein reductase] + O2 = (9Z)-16-hydroxyhexadec-9-enoate + oxidized [NADPH--hemoprotein reductase] + H2O + H(+). It carries out the reaction octadecanoate + reduced [NADPH--hemoprotein reductase] + O2 = 18-hydroxyoctadecanoate + oxidized [NADPH--hemoprotein reductase] + H2O + H(+). Its function is as follows. Catalyzes the terminal (at the omega-position) hydroxylation of a fatty acid. Probably involved in alkane metabolism. Linoleic acid is the preferred substrate, but it acts on various other C-16, C-18 and C-20 saturated and unsaturated fatty acids, namely palmitic, palmitoleic, stearic, oleic, alpha-linoleic, arachidonic and myristic acid. The polypeptide is Cytochrome P450 52-N1 (Starmerella bombicola (Yeast)).